The primary structure comprises 506 residues: ATP synthase subunit alpha (506 aa).

169–176 (GDRQTGKT) is a binding site for ATP.

Belongs to the ATPase alpha/beta chains family. In terms of assembly, F-type ATPases have 2 components, CF(1) - the catalytic core - and CF(0) - the membrane proton channel. CF(1) has five subunits: alpha(3), beta(3), gamma(1), delta(1), epsilon(1). CF(0) has three main subunits: a(1), b(2) and c(9-12). The alpha and beta chains form an alternating ring which encloses part of the gamma chain. CF(1) is attached to CF(0) by a central stalk formed by the gamma and epsilon chains, while a peripheral stalk is formed by the delta and b chains.

It is found in the cell membrane. The enzyme catalyses ATP + H2O + 4 H(+)(in) = ADP + phosphate + 5 H(+)(out). Produces ATP from ADP in the presence of a proton gradient across the membrane. The alpha chain is a regulatory subunit. This Lawsonia intracellularis (strain PHE/MN1-00) protein is ATP synthase subunit alpha.